Consider the following 706-residue polypeptide: Elongation factor G (706 aa).

The tr-type G domain occupies Lys8–Thr290. Residues Ala17–Thr24, Asp88–His92, and Asn142–Asp145 each bind GTP.

It belongs to the TRAFAC class translation factor GTPase superfamily. Classic translation factor GTPase family. EF-G/EF-2 subfamily.

The protein resides in the cytoplasm. Its function is as follows. Catalyzes the GTP-dependent ribosomal translocation step during translation elongation. During this step, the ribosome changes from the pre-translocational (PRE) to the post-translocational (POST) state as the newly formed A-site-bound peptidyl-tRNA and P-site-bound deacylated tRNA move to the P and E sites, respectively. Catalyzes the coordinated movement of the two tRNA molecules, the mRNA and conformational changes in the ribosome. In Chromohalobacter salexigens (strain ATCC BAA-138 / DSM 3043 / CIP 106854 / NCIMB 13768 / 1H11), this protein is Elongation factor G.